The primary structure comprises 177 residues: Ribulose bisphosphate carboxylase small subunit, chloroplastic 4 (177 aa).

The transit peptide at 1–56 (MASSMMASTAAAVARAGPAQTNMVPFNACRSSVPFPATRKANNDLSTLPSNGGRVS) directs the protein to the chloroplast.

This sequence belongs to the RuBisCO small chain family. Heterohexadecamer of 8 large and 8 small subunits.

The protein resides in the plastid. Its subcellular location is the chloroplast. Its function is as follows. RuBisCO catalyzes two reactions: the carboxylation of D-ribulose 1,5-bisphosphate, the primary event in carbon dioxide fixation, as well as the oxidative fragmentation of the pentose substrate. Both reactions occur simultaneously and in competition at the same active site. Although the small subunit is not catalytic it is essential for maximal activity. The protein is Ribulose bisphosphate carboxylase small subunit, chloroplastic 4 of Lemna gibba (Swollen duckweed).